A 559-amino-acid polypeptide reads, in one-letter code: TBC1 domain family member 24 (559 aa).

A 1,2-diacyl-sn-glycero-3-phospho-(1D-myo-inositol) contacts are provided by residues Lys36, Arg40, Lys238, Arg242, and 293–297; that span reads RLFSR. In terms of domain architecture, Rab-GAP TBC spans 47-262; it reads SHALRGKVYQ…KVRAGQPLES (216 aa). The TLDc domain occupies 343 to 554; that stretch reads EIVSVREMRD…IAAVEAWGFQ (212 aa). Ser473 and Ser480 each carry phosphoserine.

In terms of assembly, interacts with ARF6. As to expression, highest expression in brain.

The protein localises to the cell membrane. It is found in the cytoplasm. The protein resides in the cytoplasmic vesicle membrane. Its subcellular location is the presynapse. Its function is as follows. May act as a GTPase-activating protein for Rab family protein(s). Involved in neuronal projections development, probably through a negative modulation of ARF6 function. Involved in the regulation of synaptic vesicle trafficking. This Homo sapiens (Human) protein is TBC1 domain family member 24 (TBC1D24).